Here is a 365-residue protein sequence, read N- to C-terminus: Histidinol-phosphate aminotransferase (365 aa).

Lysine 227 carries the N6-(pyridoxal phosphate)lysine modification.

The protein belongs to the class-II pyridoxal-phosphate-dependent aminotransferase family. Histidinol-phosphate aminotransferase subfamily. As to quaternary structure, homodimer. Requires pyridoxal 5'-phosphate as cofactor.

It catalyses the reaction L-histidinol phosphate + 2-oxoglutarate = 3-(imidazol-4-yl)-2-oxopropyl phosphate + L-glutamate. Its pathway is amino-acid biosynthesis; L-histidine biosynthesis; L-histidine from 5-phospho-alpha-D-ribose 1-diphosphate: step 7/9. The protein is Histidinol-phosphate aminotransferase of Campylobacter concisus (strain 13826).